The sequence spans 86 residues: Neurotoxin E1x (86 aa).

Positions 1–19 are cleaved as a signal peptide; it reads MNSLLMITACLVVIGTVWA. Residues 20 to 84 form the LCN-type CS-alpha/beta domain; that stretch reads KEGYLVDVKG…TWPLPNKTCG (65 aa). Intrachain disulfides connect Cys30–Cys83, Cys34–Cys59, Cys43–Cys64, and Cys47–Cys66. Residue Cys83 is modified to Cysteine amide.

It belongs to the long (4 C-C) scorpion toxin superfamily. Sodium channel inhibitor family. Beta subfamily. In terms of tissue distribution, expressed by the venom gland.

It is found in the secreted. Binds to sodium channels (Nav) and inhibits the inactivation of the activated channels, thereby blocking neuronal transmission. This Centruroides sculpturatus (Arizona bark scorpion) protein is Neurotoxin E1x.